Reading from the N-terminus, the 208-residue chain is Probable adenylyl-sulfate kinase (208 aa).

Position 38–45 (Gly-38–Ser-45) interacts with ATP. The active-site Phosphoserine intermediate is Ser-112.

It belongs to the APS kinase family.

The catalysed reaction is adenosine 5'-phosphosulfate + ATP = 3'-phosphoadenylyl sulfate + ADP + H(+). It participates in sulfur metabolism; hydrogen sulfide biosynthesis; sulfite from sulfate: step 2/3. In terms of biological role, catalyzes the synthesis of activated sulfate. This chain is Probable adenylyl-sulfate kinase, found in Halalkalibacterium halodurans (strain ATCC BAA-125 / DSM 18197 / FERM 7344 / JCM 9153 / C-125) (Bacillus halodurans).